The sequence spans 80 residues: Exodeoxyribonuclease 7 small subunit (80 aa).

The protein belongs to the XseB family. As to quaternary structure, heterooligomer composed of large and small subunits.

The protein localises to the cytoplasm. The enzyme catalyses Exonucleolytic cleavage in either 5'- to 3'- or 3'- to 5'-direction to yield nucleoside 5'-phosphates.. Its function is as follows. Bidirectionally degrades single-stranded DNA into large acid-insoluble oligonucleotides, which are then degraded further into small acid-soluble oligonucleotides. The sequence is that of Exodeoxyribonuclease 7 small subunit from Rickettsia africae (strain ESF-5).